The sequence spans 1040 residues: Multidrug resistance protein MdtB (1040 aa).

The next 12 helical transmembrane spans lie at 25 to 45, 347 to 367, 369 to 389, 396 to 416, 440 to 460, 472 to 492, 537 to 557, 869 to 889, 890 to 910, 911 to 931, 968 to 988, and 998 to 1018; these read LLMA…PVAA, LMLA…NIPA, IIPG…MVFL, LTLM…IVVI, IGFT…PLLF, FAVT…TLTP, WLTL…WIVI, LIVA…ESFI, HPIT…LALM, IAGS…IGIV, ILMT…STGV, and IAMV…TPVI.

It belongs to the resistance-nodulation-cell division (RND) (TC 2.A.6) family. MdtB subfamily. As to quaternary structure, part of a tripartite efflux system composed of MdtA, MdtB and MdtC. MdtB forms a heteromultimer with MdtC.

It is found in the cell inner membrane. The protein is Multidrug resistance protein MdtB of Salmonella arizonae (strain ATCC BAA-731 / CDC346-86 / RSK2980).